The following is a 251-amino-acid chain: Ly6/PLAUR domain-containing protein 5 (251 aa).

A signal peptide spans 1–25; the sequence is MAMGVPRVILLCLFGAALCLTGSQA. Asparagine 120 and asparagine 174 each carry an N-linked (GlcNAc...) asparagine glycan. A UPAR/Ly6 domain is found at 135-214; sequence CYACIGVHQD…GSCCEGYLCN (80 aa). Alanine 225 carries GPI-anchor amidated alanine lipidation. Positions 226–251 are cleaved as a propeptide — removed in mature form; sequence SATTPPRALQVLALLLPVLLLVGLSA.

The protein resides in the cell membrane. This Homo sapiens (Human) protein is Ly6/PLAUR domain-containing protein 5 (LYPD5).